A 107-amino-acid polypeptide reads, in one-letter code: Ferredoxin Fdx8 (107 aa).

2 consecutive 4Fe-4S ferredoxin-type domains span residues 1 to 31 (MAYVIAEPCVATCDTACVPVCPVDCIHGPLA) and 50 to 79 (LQLYIDPESCICCGACENECPVGAIFDEDE). 8 residues coordinate [4Fe-4S] cluster: cysteine 9, cysteine 13, cysteine 17, cysteine 21, cysteine 59, cysteine 62, cysteine 65, and cysteine 69.

[4Fe-4S] cluster is required as a cofactor.

Functionally, ferredoxins are iron-sulfur proteins that transfer electrons in a wide variety of metabolic reactions. Fdx2 can receive electrons from both FdR_A and FdR_B ferredoxin reductases, with a preference for FdR_B compared with FdR_A, and transfer the electrons to the cytochrome P450 CYP260A1. The chain is Ferredoxin Fdx8 from Sorangium cellulosum (strain So ce56) (Polyangium cellulosum (strain So ce56)).